Consider the following 84-residue polypeptide: Large ribosomal subunit protein bL31B (84 aa).

This sequence belongs to the bacterial ribosomal protein bL31 family. Type B subfamily. In terms of assembly, part of the 50S ribosomal subunit.

This chain is Large ribosomal subunit protein bL31B, found in Rhodococcus erythropolis (strain PR4 / NBRC 100887).